The sequence spans 395 residues: GPI-anchor transamidase (395 aa).

Positions 1–27 (MVGTWFLCRGFTTLAGLLLLPFGSLAA) are cleaved as a signal peptide. Residues 28–368 (SQIEDQAEQF…PKLKDWHPPG (341 aa)) lie on the Lumenal side of the membrane. Residues Asp79, Ile82, Glu118, and Asp120 each contribute to the Ca(2+) site. Residue His164 is the Proton donor of the active site. Residue Cys206 is the Nucleophile; acyl-thioester intermediate of the active site. A protein-binding residues include Cys206, Ser232, and Ser234. The autoinhibitory loop stretch occupies residues 231 to 236 (DSLSHQ). Cysteines 275 and 280 form a disulfide. Residues 369–385 (GFILGLWALIIMVFFKT) form a helical membrane-spanning segment. Residues 386–395 (YGIKHMKFIF) lie on the Cytoplasmic side of the membrane.

It belongs to the peptidase C13 family. As to quaternary structure, heteropentamer. Part of the GPI-anchor transamidase complex, consisting of PIGK, PIGT, PIGS, PIGU and GAA1. Interacts with GPAA1. Interacts with PIGT; this interaction, via a disulfide link, stabilizes the expression of GAA1 and PIGK and links them to PIGS. Post-translationally, the disulfide bond between PIGK/GPI8 and PIGT is important for normal enzyme activity.

The protein resides in the endoplasmic reticulum membrane. It functions in the pathway glycolipid biosynthesis; glycosylphosphatidylinositol-anchor biosynthesis. Its activity is regulated as follows. In the absence of proproteins substrates, exists in an inactive state with a disrupted catalytic site by an autoinhibitory loop. The binding of proprotein substrates, particularly the CSP region, to GPI-T triggers concerted conformational changes that alleviate the inhibition by the autoinhibitory loop. Meanwhile, proprotein residues near the omega- site induce the formation of a catalytic cleft for catalysis, following which the products are released and GPI-T reverts to the inactive state. Its function is as follows. Catalytic subunit of the glycosylphosphatidylinositol-anchor (GPI-anchor) transamidase (GPI-T) complex that catalyzes the formation of the linkage between a proprotein and a GPI-anchor and participates in GPI anchored protein biosynthesis. Recognizes diverse proproteins at a C-terminal signal peptide (CSP) region that lacks consensus sequence and replaces it with a GPI-anchor via a transamidation reaction. Transamidation catalysis reaction follows a two-phase mechanism. In the acyl-enzyme phase, the carbonyl group of the proproteins's omega-site undergoes a nucleophilic attack forming an enzyme-substrate thioester bond. Followed by a general acid catalysis that allows CSP releasing, regenerating the carbonyl, and forming the acyl-enzyme intermediate. In the GPI-anchor attachment phase, the amino group of the GPI-anchor's ethanolamine phosphate, the one on third mannose (EtNP3), mediates a nucleophilic attack on the carbonyl of the acyl-enzyme intermediate, replacing the CSP, allowing GPI-anchor attachment to the omega-residue, therefore forming the product and freeing the enzyme. This is GPI-anchor transamidase from Sus scrofa (Pig).